The chain runs to 191 residues: Holliday junction branch migration complex subunit RuvA (191 aa).

The interval 1 to 64 is domain I; the sequence is MIRGVRGTLV…EDELALYGFA (64 aa). The segment at 65 to 136 is domain II; the sequence is TEAELELFLS…ELRGRLPALT (72 aa). Residues 136 to 139 are flexible linker; sequence TEVQ. Residues 140–191 are domain III; the sequence is AGEPIDQELVAALQALGYTAQEARQAATHPEVRRAPSLEERIVAALRQLAPP.

It belongs to the RuvA family. Homotetramer. Forms an RuvA(8)-RuvB(12)-Holliday junction (HJ) complex. HJ DNA is sandwiched between 2 RuvA tetramers; dsDNA enters through RuvA and exits via RuvB. An RuvB hexamer assembles on each DNA strand where it exits the tetramer. Each RuvB hexamer is contacted by two RuvA subunits (via domain III) on 2 adjacent RuvB subunits; this complex drives branch migration. In the full resolvosome a probable DNA-RuvA(4)-RuvB(12)-RuvC(2) complex forms which resolves the HJ.

It is found in the cytoplasm. In terms of biological role, the RuvA-RuvB-RuvC complex processes Holliday junction (HJ) DNA during genetic recombination and DNA repair, while the RuvA-RuvB complex plays an important role in the rescue of blocked DNA replication forks via replication fork reversal (RFR). RuvA specifically binds to HJ cruciform DNA, conferring on it an open structure. The RuvB hexamer acts as an ATP-dependent pump, pulling dsDNA into and through the RuvAB complex. HJ branch migration allows RuvC to scan DNA until it finds its consensus sequence, where it cleaves and resolves the cruciform DNA. This Thermomicrobium roseum (strain ATCC 27502 / DSM 5159 / P-2) protein is Holliday junction branch migration complex subunit RuvA.